Consider the following 152-residue polypeptide: UPF0719 transmembrane protein MT2674.1 (152 aa).

The next 4 helical transmembrane spans lie at 21 to 41 (VATV…FLMV), 62 to 82 (VVLA…AIYA), 92 to 112 (IGVA…LVIL), and 131 to 151 (PAVF…AAAL).

This sequence belongs to the UPF0719 family.

It localises to the cell membrane. In Mycobacterium tuberculosis (strain CDC 1551 / Oshkosh), this protein is UPF0719 transmembrane protein MT2674.1.